Consider the following 166-residue polypeptide: uncharacterized protein (166 aa).

The protein to M.jannaschii MJ0992.

This is an uncharacterized protein from Methanocaldococcus jannaschii (strain ATCC 43067 / DSM 2661 / JAL-1 / JCM 10045 / NBRC 100440) (Methanococcus jannaschii).